Reading from the N-terminus, the 252-residue chain is Ubiquinone biosynthesis O-methyltransferase (252 aa).

The S-adenosyl-L-methionine site is built by arginine 45, glycine 76, aspartate 97, and methionine 141.

It belongs to the methyltransferase superfamily. UbiG/COQ3 family.

It carries out the reaction a 3-demethylubiquinol + S-adenosyl-L-methionine = a ubiquinol + S-adenosyl-L-homocysteine + H(+). The enzyme catalyses a 3-(all-trans-polyprenyl)benzene-1,2-diol + S-adenosyl-L-methionine = a 2-methoxy-6-(all-trans-polyprenyl)phenol + S-adenosyl-L-homocysteine + H(+). It participates in cofactor biosynthesis; ubiquinone biosynthesis. Functionally, O-methyltransferase that catalyzes the 2 O-methylation steps in the ubiquinone biosynthetic pathway. This chain is Ubiquinone biosynthesis O-methyltransferase, found in Caulobacter vibrioides (strain ATCC 19089 / CIP 103742 / CB 15) (Caulobacter crescentus).